We begin with the raw amino-acid sequence, 299 residues long: tRNA dimethylallyltransferase (299 aa).

Residue 10–17 (GPTAVGKT) participates in ATP binding. Residue 12 to 17 (TAVGKT) coordinates substrate. Residues 35–38 (DSQQ) form an interaction with substrate tRNA region.

It belongs to the IPP transferase family. As to quaternary structure, monomer. Mg(2+) serves as cofactor.

It catalyses the reaction adenosine(37) in tRNA + dimethylallyl diphosphate = N(6)-dimethylallyladenosine(37) in tRNA + diphosphate. Catalyzes the transfer of a dimethylallyl group onto the adenine at position 37 in tRNAs that read codons beginning with uridine, leading to the formation of N6-(dimethylallyl)adenosine (i(6)A). In Streptococcus thermophilus (strain ATCC BAA-250 / LMG 18311), this protein is tRNA dimethylallyltransferase.